The chain runs to 471 residues: Proline--tRNA ligase (471 aa).

This sequence belongs to the class-II aminoacyl-tRNA synthetase family. ProS type 3 subfamily. In terms of assembly, homodimer.

Its subcellular location is the cytoplasm. It carries out the reaction tRNA(Pro) + L-proline + ATP = L-prolyl-tRNA(Pro) + AMP + diphosphate. In terms of biological role, catalyzes the attachment of proline to tRNA(Pro) in a two-step reaction: proline is first activated by ATP to form Pro-AMP and then transferred to the acceptor end of tRNA(Pro). This chain is Proline--tRNA ligase, found in Archaeoglobus fulgidus (strain ATCC 49558 / DSM 4304 / JCM 9628 / NBRC 100126 / VC-16).